Reading from the N-terminus, the 351-residue chain is Porphobilinogen deaminase (351 aa).

S-(dipyrrolylmethanemethyl)cysteine is present on Cys242.

Belongs to the HMBS family. As to quaternary structure, monomer. It depends on dipyrromethane as a cofactor.

It catalyses the reaction 4 porphobilinogen + H2O = hydroxymethylbilane + 4 NH4(+). Its pathway is porphyrin-containing compound metabolism; protoporphyrin-IX biosynthesis; coproporphyrinogen-III from 5-aminolevulinate: step 2/4. Tetrapolymerization of the monopyrrole PBG into the hydroxymethylbilane pre-uroporphyrinogen in several discrete steps. The polypeptide is Porphobilinogen deaminase (Rickettsia africae (strain ESF-5)).